The primary structure comprises 217 residues: UDP-N-acetylglucosamine transferase subunit ALG14 (217 aa).

Topologically, residues 1-3 are lumenal; sequence MLS. Residues 4–26 form a helical membrane-spanning segment; it reads ILILAATAAGLVILLFQRLWTVL. Topologically, residues 27–217 are cytoplasmic; it reads GPHHVTPRES…PKSVYLGRIV (191 aa).

Belongs to the ALG14 family. Forms with ALG13 the active heterodimeric UDP-N-acetylglucosamine transferase complex.

It is found in the endoplasmic reticulum membrane. In terms of biological role, part of the UDP-N-acetylglucosamine transferase complex that operates in the biosynthetic pathway of dolichol-linked oligosaccharides, the glycan precursors employed in protein asparagine (N)-glycosylation. The assembly of dolichol-linked oligosaccharides begins on the cytosolic side of the endoplasmic reticulum membrane and finishes in its lumen. The sequential addition of sugars to dolichol pyrophosphate produces dolichol-linked oligosaccharides containing fourteen sugars, including two GlcNAcs, nine mannoses and three glucoses. Once assembled, the oligosaccharides are transferred from the lipid to nascent proteins by oligosaccharyltransferases. Functions as a protein-membrane adapter recruiting ALG13 at the cytoplasmic face of the endoplasmic reticulum, where the complex catalyzes the second step of dolichol pyrophosphate biosynthesis, transferring a beta1,4-linked N-acetylglucosamine (GlcNAc) from UDP-GlcNAc to GlcNAc-pyrophosphatedolichol (Gn-PDol) to produce N,N'-diacetylchitobiosyl diphosphodolichol. N,N'-diacetylchitobiosyl diphosphodolichol is a substrate for ALG1, the following enzyme in the biosynthetic pathway. The protein is UDP-N-acetylglucosamine transferase subunit ALG14 of Mus musculus (Mouse).